Consider the following 904-residue polypeptide: E3 ubiquitin-protein ligase HACE1 (904 aa).

ANK repeat units follow at residues 34-63, 68-97, 101-130, 134-163, 167-196, 200-230, and 232-261; these read AVYT…DVNY, VKRS…NPNY, SGCT…DVNI, EGLT…NVDV, MGQT…DINR, SGAT…YLPD, and NGVT…RLFQ. Positions 569 to 904 constitute an HECT domain; that stretch reads SNEKLKQGIA…HCGSYGYTMA (336 aa). Cys871 (glycyl thioester intermediate) is an active-site residue.

Its subcellular location is the golgi apparatus. The protein localises to the golgi stack membrane. It localises to the cytoplasm. The protein resides in the endoplasmic reticulum. It catalyses the reaction S-ubiquitinyl-[E2 ubiquitin-conjugating enzyme]-L-cysteine + [acceptor protein]-L-lysine = [E2 ubiquitin-conjugating enzyme]-L-cysteine + N(6)-ubiquitinyl-[acceptor protein]-L-lysine.. Its pathway is protein modification; protein ubiquitination. Functionally, E3 ubiquitin-protein ligase involved in Golgi membrane fusion and regulation of small GTPases. Acts as a regulator of Golgi membrane dynamics during the cell cycle: recruited to Golgi membrane by Rab proteins and regulates postmitotic Golgi membrane fusion. Acts by mediating ubiquitination during mitotic Golgi disassembly, ubiquitination serving as a signal for Golgi reassembly later, after cell division. This is E3 ubiquitin-protein ligase HACE1 (hace1) from Danio rerio (Zebrafish).